Here is a 320-residue protein sequence, read N- to C-terminus: Cytochrome c biogenesis protein CcsA (320 aa).

A run of 8 helical transmembrane segments spans residues 9–29 (ILAHISFSLILVVTLIYWGTL), 36–56 (LSSSGGKGMIVTFLCTTGLLI), 70–90 (LYESFMFLSWSSSVFHILLEV), 97–117 (WLGAITAPSAMLTHGFATLGL), 143–163 (ILFSYATLLCGSLASIALLVI), 227–247 (AIGLGFSLSTIGTLSGAIWAN), 254–274 (WSWDPKETWALITWTIFAIYL), and 288–308 (AIVASLGFFIVWIRYLGVNLL).

This sequence belongs to the CcmF/CycK/Ccl1/NrfE/CcsA family. May interact with Ccs1.

The protein resides in the plastid. It localises to the chloroplast thylakoid membrane. Its function is as follows. Required during biogenesis of c-type cytochromes (cytochrome c6 and cytochrome f) at the step of heme attachment. The protein is Cytochrome c biogenesis protein CcsA of Pinus thunbergii (Japanese black pine).